A 2159-amino-acid polypeptide reads, in one-letter code: ATP-binding cassette sub-family A member 7 (2159 aa).

A helical membrane pass occupies residues Pro-22 to Val-42. Topologically, residues Arg-43 to Ser-546 are extracellular. A disulfide bridge links Cys-75 with Cys-222. The N-linked (GlcNAc...) asparagine glycan is linked to Asn-309. 6 helical membrane passes run Leu-547 to Val-567, Leu-590 to Val-610, Val-623 to Leu-643, Leu-652 to Val-672, Leu-678 to Cys-698, and Ala-732 to Cys-752. In terms of domain architecture, ABC transporter 1 spans Val-804–Val-1035. Gly-838–Thr-845 contributes to the ATP binding site. A helical transmembrane segment spans residues Thr-846–Gly-866. Disordered stretches follow at residues Val-1042–Pro-1088 and Gly-1172–Pro-1192. A compositionally biased stretch (basic and acidic residues) spans His-1044–Gly-1061. Positions Asn-1062–Ala-1081 are enriched in polar residues. The chain crosses the membrane as a helical span at residues Val-1246–Phe-1266. Over Gly-1267–Leu-1551 the chain is Extracellular. Cys-1359 and Cys-1373 form a disulfide bridge. The next 5 helical transmembrane spans lie at Val-1552 to Ile-1572, Phe-1598 to Ala-1618, Leu-1635 to Phe-1655, Val-1663 to Leu-1683, and Ile-1743 to Leu-1763. The ABC transporter 2 domain occupies Leu-1807–Arg-2039. ATP is bound at residue Gly-1841–Thr-1848. The interval Gln-2118–Ile-2159 is disordered. The segment covering Gly-2119–Glu-2133 has biased composition (acidic residues).

It belongs to the ABC transporter superfamily. ABCA family. In terms of processing, N-glycosylated. As to expression, widely expressed with higher expression in brain, lung, adrenal gland, spleen and hematopoietic tissues (at protein level). In the brain, expressed in cortex, cerebellum, hippocampus, olfactory bulb, neurons, astrocytes and microglia (at protein level). Also expressed in adipocytes and macrophages (at protein level). Expressed in thymocytes (at protein level). Highly expressed in spleen and hematopoietic tissues. Expressed in brain, lung, macrophages, microglia, oligodendrocytes and neurons.

It localises to the cell membrane. It is found in the golgi apparatus membrane. The protein resides in the early endosome membrane. The protein localises to the cytoplasm. Its subcellular location is the cell projection. It localises to the ruffle membrane. It is found in the phagocytic cup. In terms of biological role, probable ATP-binding cassette (ABC) transporter that plays a role in lipid homeostasis and macrophage-mediated phagocytosis. Binds APOA1 and may function in apolipoprotein-mediated phospholipid efflux from cells. May also mediate cholesterol efflux. May regulate cellular ceramide homeostasis during keratinocyte differentiation. Involved in lipid raft organization and CD1D localization on thymocytes and antigen-presenting cells, which plays an important role in natural killer T-cell development and activation. Plays a role in phagocytosis of apoptotic cells by macrophages. Macrophage phagocytosis is stimulated by APOA1 or APOA2, probably by stabilization of ABCA7. Also involved in phagocytic clearance of amyloid-beta by microglia cells and macrophages. Further limits amyloid-beta production by playing a role in the regulation of amyloid-beta A4 precursor protein (APP) endocytosis and/or processing. In Mus musculus (Mouse), this protein is ATP-binding cassette sub-family A member 7 (Abca7).